Consider the following 257-residue polypeptide: Transmembrane protein 101 (257 aa).

A run of 8 helical transmembrane segments spans residues Val21–Glu40, Val52–Gly72, Trp77–Gly97, Tyr110–Leu130, Ser139–Leu159, Leu182–Leu202, Ile206–His226, and Phe233–Leu253.

Its subcellular location is the membrane. May activate NF-kappa-B signaling pathways. The chain is Transmembrane protein 101 (TMEM101) from Pongo abelii (Sumatran orangutan).